Reading from the N-terminus, the 211-residue chain is Arginine exporter protein ArgO (211 aa).

A run of 6 helical transmembrane segments spans residues 1 to 21 (MISY…PLGP), 37 to 57 (LMIA…GIFG), 68 to 88 (LLAL…LGAL), 111 to 131 (IIAT…DTFV), 147 to 167 (WFAL…ALLA), and 179 to 199 (AQRI…FQLA).

It belongs to the LysE/ArgO transporter (TC 2.A.75) family.

The protein localises to the cell inner membrane. The catalysed reaction is L-arginine(in) = L-arginine(out). Its function is as follows. Involved in the export of arginine. Important to control the intracellular level of arginine and the correct balance between arginine and lysine. This is Arginine exporter protein ArgO from Salmonella enteritidis PT4 (strain P125109).